The primary structure comprises 678 residues: RAS guanyl-releasing protein 4 (678 aa).

2 stretches are compositionally biased toward basic residues: residues 1–10 (MNRKDIKRKS) and 20–32 (GHGR…RHKT). Disordered regions lie at residues 1–33 (MNRK…HKTC) and 165–185 (GDAS…MSSP). An N-terminal Ras-GEF domain is found at 49-175 (GVLSESSCSV…DASNLLSPGG (127 aa)). A Ras-GEF domain is found at 201-432 (ETEELAQHLT…YELSYAREPR (232 aa)). The 36-residue stretch at 466–501 (HVEQLVESVFKNYDPEGHGSISLEDFEKLSANFPFA) folds into the EF-hand domain. A Phorbol-ester/DAG-type zinc finger spans residues 540–595 (LHAFQEVTFRKPTFCHSCNGFVSTGPLWGVTKRGYRCQDCGLCCHRHCRDQVRVEC). 2 disordered regions span residues 598-620 (RPET…LPPT) and 651-678 (SSHS…KSSV). Pro residues predominate over residues 605 to 619 (PGPPGAPGPATPLPP).

The protein belongs to the RASGRP family. As to expression, expressed by mast cells and their progenitors (at protein level).

It localises to the cytoplasm. The protein resides in the cell membrane. Functionally, functions as a cation- and diacylglycerol (DAG)-regulated nucleotide exchange factor activating Ras through the exchange of bound GDP for GTP. In neutrophils, participates in a phospholipase C-activating N-formyl peptide-activated GPCR (G protein-coupled receptor) signaling pathway by promoting Ras-mediated activation of PIK3CG/PI3Kgamma to promote neutrophil functional responses. In CD117(+) dendritic cells and mast cells, participates in an lipopolysaccharide (LPS)-activated signaling pathway that stimulates the production of interferon-gamma and other pro-inflammatory cytokines by natural killer (NK) cells. May function in mast cell differentiation. Does not appear to be required for the development of B-cells, DC-cells, T-cells, or NK-cells. The protein is RAS guanyl-releasing protein 4 (Rasgrp4) of Rattus norvegicus (Rat).